We begin with the raw amino-acid sequence, 1428 residues long: DNA topoisomerase 2 (1428 aa).

Residues Asn-70, Asn-99, 127–129, and 140–147 each bind ATP; these read SSN and GRNGYGAK. Residues 333–336 form an interaction with DNA region; the sequence is KKKK. Position 365–367 (365–367) interacts with ATP; that stretch reads QTK. The 115-residue stretch at 443-557 folds into the Toprim domain; that stretch reads CTLVLTEGDS…GLLDIQGFLL (115 aa). Positions 449, 526, and 528 each coordinate Mg(2+). Positions 692 to 1159 constitute a Topo IIA-type catalytic domain; sequence IPNVLDGFKP…SAKDIWNTDL (468 aa). Catalysis depends on Tyr-782, which acts as the O-(5'-phospho-DNA)-tyrosine intermediate. An interaction with DNA region spans residues 965–974; sequence KLISPISLMN. 4 disordered regions span residues 1083 to 1102, 1176 to 1217, 1240 to 1288, and 1303 to 1428; these read KGAT…TENV, ARGG…RKGK, KAPT…ELSK, and MGST…NEED. A Phosphothreonine; by CK2 modification is found at Thr-1086. Residue Ser-1087 is modified to Phosphoserine; by CK2. A compositionally biased stretch (basic residues) spans 1207-1217; sequence KNKKSTARKGK. Phosphoserine is present on Ser-1252. A Phosphothreonine; by CK2 modification is found at Thr-1258. Phosphoserine; by CK2 is present on residues Ser-1266, Ser-1269, and Ser-1272. The segment covering 1275–1286 has biased composition (basic and acidic residues); the sequence is DIKKEDKDEGEL. Residues 1332-1347 show a composition bias toward basic residues; that stretch reads TAVKPKLAKKPVRKQQ. Residues Ser-1353, Ser-1356, Ser-1408, and Ser-1423 each carry the phosphoserine; by CK2 modification. Residues 1403 to 1428 are compositionally biased toward acidic residues; the sequence is ELSDDSFIEDDEEENQGSDVSFNEED.

It belongs to the type II topoisomerase family. As to quaternary structure, homodimer. The cofactor is Mg(2+). It depends on Mn(2+) as a cofactor. Ca(2+) is required as a cofactor. In terms of processing, phosphorylation enhances the activity. Stimulates decatenation activity.

Its subcellular location is the nucleus. It carries out the reaction ATP-dependent breakage, passage and rejoining of double-stranded DNA.. Its function is as follows. Control of topological states of DNA by transient breakage and subsequent rejoining of DNA strands. Topoisomerase II makes double-strand breaks. Essential during mitosis and meiosis for proper segregation of daughter chromosomes. The chain is DNA topoisomerase 2 (TOP2) from Saccharomyces cerevisiae (strain ATCC 204508 / S288c) (Baker's yeast).